The following is a 922-amino-acid chain: Probable dipeptidyl-aminopeptidase B (922 aa).

A compositionally biased stretch (basic and acidic residues) spans 1–16 (MATEKGHSRDDEERVP). A disordered region spans residues 1-21 (MATEKGHSRDDEERVPLTRGS). Residues 1-99 (MATEKGHSRD…KPMHKSVKIA (99 aa)) lie on the Cytoplasmic side of the membrane. The helical; Signal-anchor for type II membrane protein transmembrane segment at 100–120 (LWSLLFLSLGGWSLAFVLFIF) threads the bilayer. Over 121 to 922 (RSHDTYQTPI…AGLYKFKHLC (802 aa)) the chain is Vacuolar. N-linked (GlcNAc...) asparagine glycosylation is found at Asn135, Asn200, Asn351, and Asn574. Residue Ser756 is the Charge relay system of the active site. Asn815 is a glycosylation site (N-linked (GlcNAc...) asparagine). Catalysis depends on charge relay system residues Asp833 and His866. The N-linked (GlcNAc...) asparagine glycan is linked to Asn902.

Belongs to the peptidase S9B family.

The protein localises to the vacuole membrane. It carries out the reaction Release of an N-terminal dipeptide, Xaa-Yaa-|-Zaa-, from a polypeptide, preferentially when Yaa is Pro, provided Zaa is neither Pro nor hydroxyproline.. In terms of biological role, type IV dipeptidyl-peptidase which removes N-terminal dipeptides sequentially from polypeptides having unsubstituted N-termini provided that the penultimate residue is proline. The sequence is that of Probable dipeptidyl-aminopeptidase B (DAPB) from Ajellomyces capsulatus (strain NAm1 / WU24) (Darling's disease fungus).